A 368-amino-acid polypeptide reads, in one-letter code: uncharacterized protein (368 aa).

A Response regulatory domain is found at 3-120 (KILLADDERI…QIISSLEEII (118 aa)). Residue Asp-55 is modified to 4-aspartylphosphate. Positions 259–361 (SKMIRLIADE…GLTPSEFRRK (103 aa)) constitute an HTH araC/xylS-type domain. DNA-binding regions (H-T-H motif) lie at residues 278-299 (WAAKDMLFMNPDYLGKLFKQET) and 327-351 (VSEIAEEIGFGDNPKYFSLVFKKYT).

Post-translationally, phosphorylated by YesM.

The protein localises to the cytoplasm. Its function is as follows. Member of the two-component regulatory system YesM/YesN. This is an uncharacterized protein from Bacillus subtilis (strain 168).